Consider the following 78-residue polypeptide: Acyl carrier protein (78 aa).

The region spanning 2–77 is the Carrier domain; that stretch reads SDIAERVKKI…DAVKFIEKAQ (76 aa). Ser-37 is modified (O-(pantetheine 4'-phosphoryl)serine).

The protein belongs to the acyl carrier protein (ACP) family. Post-translationally, 4'-phosphopantetheine is transferred from CoA to a specific serine of apo-ACP by AcpS. This modification is essential for activity because fatty acids are bound in thioester linkage to the sulfhydryl of the prosthetic group.

The protein resides in the cytoplasm. The protein operates within lipid metabolism; fatty acid biosynthesis. Functionally, carrier of the growing fatty acid chain in fatty acid biosynthesis. The protein is Acyl carrier protein of Rhizobium etli (strain CIAT 652).